Consider the following 429-residue polypeptide: Adenylosuccinate synthetase (429 aa).

GTP-binding positions include 12-18 (GDEGKGK) and 40-42 (GHT). The active-site Proton acceptor is Asp13. Residues Asp13 and Gly40 each coordinate Mg(2+). Residues 13–16 (DEGK), 38–41 (NAGH), Thr128, Arg142, Gln223, Thr238, and Arg302 contribute to the IMP site. Residue His41 is the Proton donor of the active site. Position 298–304 (298–304 (VNTGRKR)) interacts with substrate. GTP-binding positions include Arg304, 330–332 (KLD), and 412–414 (GVG).

The protein belongs to the adenylosuccinate synthetase family. In terms of assembly, homodimer. It depends on Mg(2+) as a cofactor.

Its subcellular location is the cytoplasm. The catalysed reaction is IMP + L-aspartate + GTP = N(6)-(1,2-dicarboxyethyl)-AMP + GDP + phosphate + 2 H(+). Its pathway is purine metabolism; AMP biosynthesis via de novo pathway; AMP from IMP: step 1/2. Functionally, plays an important role in the de novo pathway of purine nucleotide biosynthesis. Catalyzes the first committed step in the biosynthesis of AMP from IMP. The polypeptide is Adenylosuccinate synthetase (Corynebacterium efficiens (strain DSM 44549 / YS-314 / AJ 12310 / JCM 11189 / NBRC 100395)).